The chain runs to 210 residues: Na(+)-translocating NADH-quinone reductase subunit D (210 aa).

5 consecutive transmembrane segments (helical) span residues 42-62 (FVMT…VSVI), 72-92 (IIVQ…ILKA), 103-123 (VFVG…AFAM), 131-151 (LIDG…VGFF), and 178-198 (NGLM…IWAI).

The protein belongs to the NqrDE/RnfAE family. In terms of assembly, composed of six subunits; NqrA, NqrB, NqrC, NqrD, NqrE and NqrF.

It is found in the cell inner membrane. The catalysed reaction is a ubiquinone + n Na(+)(in) + NADH + H(+) = a ubiquinol + n Na(+)(out) + NAD(+). Its function is as follows. NQR complex catalyzes the reduction of ubiquinone-1 to ubiquinol by two successive reactions, coupled with the transport of Na(+) ions from the cytoplasm to the periplasm. NqrA to NqrE are probably involved in the second step, the conversion of ubisemiquinone to ubiquinol. The sequence is that of Na(+)-translocating NADH-quinone reductase subunit D from Vibrio vulnificus (strain YJ016).